A 166-amino-acid chain; its full sequence is 2-C-methyl-D-erythritol 2,4-cyclodiphosphate synthase (166 aa).

2 residues coordinate a divalent metal cation: Asp-17 and His-19. 4-CDP-2-C-methyl-D-erythritol 2-phosphate contacts are provided by residues 17-19 (DSH) and 43-44 (HS). An a divalent metal cation-binding site is contributed by His-51. 4-CDP-2-C-methyl-D-erythritol 2-phosphate is bound by residues 65-67 (DIG), 109-115 (AQKPKMA), and Arg-151.

This sequence belongs to the IspF family. In terms of assembly, homotrimer. It depends on a divalent metal cation as a cofactor.

It carries out the reaction 4-CDP-2-C-methyl-D-erythritol 2-phosphate = 2-C-methyl-D-erythritol 2,4-cyclic diphosphate + CMP. The protein operates within isoprenoid biosynthesis; isopentenyl diphosphate biosynthesis via DXP pathway; isopentenyl diphosphate from 1-deoxy-D-xylulose 5-phosphate: step 4/6. Involved in the biosynthesis of isopentenyl diphosphate (IPP) and dimethylallyl diphosphate (DMAPP), two major building blocks of isoprenoid compounds. Catalyzes the conversion of 4-diphosphocytidyl-2-C-methyl-D-erythritol 2-phosphate (CDP-ME2P) to 2-C-methyl-D-erythritol 2,4-cyclodiphosphate (ME-CPP) with a corresponding release of cytidine 5-monophosphate (CMP). This Rhodopirellula baltica (strain DSM 10527 / NCIMB 13988 / SH1) protein is 2-C-methyl-D-erythritol 2,4-cyclodiphosphate synthase.